Reading from the N-terminus, the 874-residue chain is MEKLLRLCCWYSWLLLFYYNFQVRGVYSRSQDHPGFQVLASASHYWPLENVDGIHELQDTTGDIVEGKVNKGIYLKEEKGVTLLYYGRYNSSCISKPEQCGPEGVTFSFFWKTQGEQSRPIPSAYGGQVISNGFKVCSSGGRGSVELYTRDNSMTWEASFSPPGPYWTHVLFTWKSKEGLKVYVNGTLSTSDPSGKVSRDYGESNVNLVIGSEQDQAKCYENGAFDEFIIWERALTPDEIAMYFTAAIGKHALLSSTLPSLFMTSTASPVMPTDAYHPIITNLTEERKTFQSPGVILSYLQNVSLSLPSKSLSEQTALNLTKTFLKAVGEILLLPGWIALSEDSAVVLSLIDTIDTVMGHVSSNLHGSTPQVTVEGSSAMAEFSVAKILPKTVNSSHYRFPAHGQSFIQIPHEAFHRHAWSTVVGLLYHSMHYYLNNIWPAHTKIAEAMHHQDCLLFATSHLISLEVSPPPTLSQNLSGSPLITVHLKHRLTRKQHSEATNSSNRVFVYCAFLDFSSGEGVWSNHGCALTRGNLTYSVCRCTHLTNFAILMQVVPLELARGHQVALSSISYVGCSLSVLCLVATLVTFAVLSSVSTIRNQRYHIHANLSFAVLVAQVLLLISFRLEPGTTPCQVMAVLLHYFFLSAFAWMLVEGLHLYSMVIKVFGSEDSKHRYYYGMGWGFPLLICIISLSFAMDSYGTSNNCWLSLASGAIWAFVAPALFVIVVNIGILIAVTRVISQISADNYKIHGDPSAFKLTAKAVAVLLPILGTSWVFGVLAVNGCAVVFQYMFATLNSLQGLFIFLFHCLLNSEVRAAFKHKTKVWSLTSSSARTSNAKPFHSDLMNGTRPGMASTKLSPWDKSSHSAHRVDLSAV.

The N-terminal stretch at 1–25 is a signal peptide; it reads MEKLLRLCCWYSWLLLFYYNFQVRG. Residues 26–567 are Extracellular-facing; sequence VYSRSQDHPG…LARGHQVALS (542 aa). The Pentraxin (PTX) domain occupies 79–276; it reads KGVTLLYYGR…ASPVMPTDAY (198 aa). Residues Asn90, Asn185, Asn282, Asn302, Asn319, Asn394, Asn476, Asn501, and Asn533 are each glycosylated (N-linked (GlcNAc...) asparagine). The region spanning 371 to 557 is the GAIN-B domain; the sequence is QVTVEGSSAM…AILMQVVPLE (187 aa). Cystine bridges form between Cys510–Cys539 and Cys527–Cys541. The GPS stretch occupies residues 510–557; the sequence is CAFLDFSSGEGVWSNHGCALTRGNLTYSVCRCTHLTNFAILMQVVPLE. Residues 546-554 form a stachel region; it reads NFAILMQVV. Gln563 contributes to the 17beta-hydroxy-5alpha-androstan-3-one binding site. Residues 568–590 form a helical membrane-spanning segment; that stretch reads SISYVGCSLSVLCLVATLVTFAV. The Cytoplasmic portion of the chain corresponds to 591–601; it reads LSSVSTIRNQR. A helical transmembrane segment spans residues 602–623; the sequence is YHIHANLSFAVLVAQVLLLISF. Residues 624-632 are Extracellular-facing; it reads RLEPGTTPC. The cysteines at positions 632 and 704 are disulfide-linked. The helical transmembrane segment at 633 to 655 threads the bilayer; sequence QVMAVLLHYFFLSAFAWMLVEGL. Residues 656–673 are Cytoplasmic-facing; it reads HLYSMVIKVFGSEDSKHR. The chain crosses the membrane as a helical span at residues 674–695; the sequence is YYYGMGWGFPLLICIISLSFAM. Over 696–710 the chain is Extracellular; it reads DSYGTSNNCWLSLAS. A helical transmembrane segment spans residues 711–732; the sequence is GAIWAFVAPALFVIVVNIGILI. Over 733–757 the chain is Cytoplasmic; it reads AVTRVISQISADNYKIHGDPSAFKL. A helical membrane pass occupies residues 758 to 780; that stretch reads TAKAVAVLLPILGTSWVFGVLAV. The Extracellular portion of the chain corresponds to 781 to 783; sequence NGC. A helical transmembrane segment spans residues 784–810; that stretch reads AVVFQYMFATLNSLQGLFIFLFHCLLN. Asn795 lines the 17beta-hydroxy-5alpha-androstan-3-one pocket. Over 811–874 the chain is Cytoplasmic; the sequence is SEVRAAFKHK…SAHRVDLSAV (64 aa). Residues 854-874 form a disordered region; that stretch reads TKLSPWDKSSHSAHRVDLSAV. Basic and acidic residues predominate over residues 861–874; it reads KSSHSAHRVDLSAV.

It belongs to the G-protein coupled receptor 2 family. Adhesion G-protein coupled receptor (ADGR) subfamily. In terms of assembly, heterodimer of 2 chains generated by proteolytic processing; the large extracellular N-terminal fragment and the membrane-bound C-terminal fragment predominantly remain associated and non-covalently linked. Interacts with ESYT1; interaction takes place in absence of cytosolic calcium and inhibits the G protein-coupled receptor activity of ADGRD1. Post-translationally, autoproteolytically processed at the GPS region of the GAIN-B domain; this cleavage modulates receptor activity. Cleavage takes place early in the secretory pathway before N-glycosylation. In terms of tissue distribution, up-regulated in CD133(+) cell population of glioblastoma.

It localises to the cell membrane. Forms a heterodimer of 2 chains generated by proteolytic processing that remain associated through non-covalent interactions mediated by the GAIN-B domain. In the inactivated receptor, the Stachel sequence (also named stalk) is embedded in the GAIN-B domain, where it adopts a beta-strand conformation. On activation, the Stachel moves into the 7 transmembrane region and adopts a twisted hook-shaped configuration that forms contacts within the receptor, leading to coupling of a G-alpha protein, which activates signaling. The cleaved GAIN-B and N-terminal domains can then dissociate from the rest of the receptor. Interaction with ESYT1 in absence of cytosolic calcium inhibits the G protein-coupled receptor activity; interaction and inhibition is relieved when cytosolic calcium increases. Activated by AP503, a small molecule that activates ADGRD1 without activating androgen nuclear receptors: AP503 enhances muscle strength without eliciting androgenic adverse effects. Activated by the 8E3E8 antibody that targets the N-terminus. In terms of biological role, adhesion G-protein coupled receptor (aGPCR) for androgen hormone 5alpha-dihydrotestosterone (5alpha-DHT), also named 17beta-hydroxy-5alpha-androstan-3-one, the most potent hormone among androgens. Also activated by methenolone drug. Ligand binding causes a conformation change that triggers signaling via guanine nucleotide-binding proteins (G proteins) and modulates the activity of downstream effectors, such as adenylate cyclase. ADGRD1 is coupled to G(s) G proteins and mediates activation of adenylate cyclase activity. Acts as a 5alpha-DHT receptor in muscle cells, thereby increasing intracellular cyclic AMP (cAMP) levels and enhancing muscle strength. The chain is Adhesion G-protein coupled receptor D1 from Homo sapiens (Human).